The primary structure comprises 257 residues: Cytochrome b561 domain-containing protein At2g30890 (257 aa).

The first 21 residues, Met-1–Ser-21, serve as a signal peptide directing secretion. A Cytochrome b561 domain is found at Gln-22 to Gln-219. The next 5 helical transmembrane spans lie at Val-55–Ile-75, Leu-91–Val-111, His-125–Leu-145, Trp-157–Tyr-177, and Ala-191–Phe-211. Positions 56, 95, 125, and 161 each coordinate heme b. The interval Asn-235–Cys-257 is disordered. Residues His-243–Cys-257 show a composition bias toward basic and acidic residues.

Heme b serves as cofactor.

The protein localises to the membrane. This chain is Cytochrome b561 domain-containing protein At2g30890, found in Arabidopsis thaliana (Mouse-ear cress).